A 977-amino-acid chain; its full sequence is Disks large-associated protein 1 (977 aa).

Disordered regions lie at residues T150–S203 and K349–A371. A phosphoserine mark is found at S169, S356, S359, S362, S366, S383, S412, S415, S419, S422, S431, S503, S510, and S562. T563 carries the phosphothreonine modification. Phosphoserine is present on residues S565 and S589. Position 590 is a phosphothreonine (T590). A phosphoserine mark is found at S592 and S595. Interaction with DYL2 stretches follow at residues L650–E661 and S672–E683. A disordered region spans residues W899–S965. 2 stretches are compositionally biased toward basic and acidic residues: residues D903–A912 and I928–K943. A Phosphoserine modification is found at S932. A compositionally biased stretch (polar residues) spans V954–A963. A PDZ-binding motif is present at residues T975–L977.

It belongs to the SAPAP family. In terms of assembly, interacts with guanylate kinase-like domain of DLG1, DLG2, DLG3, DLG4 and AIP1. Interacts with the PDZ domain of SHANK1, SHANK2 and SHANK3. Found in a complex with DLG4 and SHANK1, SHANK2 or SHANK3. Found in a complex with DLG4 and BEGAIN. Interacts with DYL2 and LRFN1. Interacts with MPP2 (via the SH3-Guanylate kinase-like sub-module). Ubiquitinated by TRIM3; leading to proteasomal degradation. As to expression, expressed in brain.

The protein localises to the cell membrane. It is found in the postsynaptic density. Its subcellular location is the synapse. Part of the postsynaptic scaffold in neuronal cells. The protein is Disks large-associated protein 1 (DLGAP1) of Homo sapiens (Human).